A 279-amino-acid polypeptide reads, in one-letter code: Pantothenate synthetase (279 aa).

26–33 (MGNLHDGH) is a binding site for ATP. H33 serves as the catalytic Proton donor. Residue Q57 coordinates (R)-pantoate. Q57 is a beta-alanine binding site. 144 to 147 (GKKD) contacts ATP. Q150 serves as a coordination point for (R)-pantoate. Residue 181 to 184 (LSSR) coordinates ATP.

This sequence belongs to the pantothenate synthetase family. In terms of assembly, homodimer.

The protein localises to the cytoplasm. The catalysed reaction is (R)-pantoate + beta-alanine + ATP = (R)-pantothenate + AMP + diphosphate + H(+). It functions in the pathway cofactor biosynthesis; (R)-pantothenate biosynthesis; (R)-pantothenate from (R)-pantoate and beta-alanine: step 1/1. In terms of biological role, catalyzes the condensation of pantoate with beta-alanine in an ATP-dependent reaction via a pantoyl-adenylate intermediate. The sequence is that of Pantothenate synthetase from Janthinobacterium sp. (strain Marseille) (Minibacterium massiliensis).